A 209-amino-acid polypeptide reads, in one-letter code: Ribonuclease HII (209 aa).

The region spanning aspartate 20–isoleucine 209 is the RNase H type-2 domain. Aspartate 26, glutamate 27, and aspartate 122 together coordinate a divalent metal cation.

This sequence belongs to the RNase HII family. Mn(2+) is required as a cofactor. Requires Mg(2+) as cofactor.

It localises to the cytoplasm. It catalyses the reaction Endonucleolytic cleavage to 5'-phosphomonoester.. In terms of biological role, endonuclease that specifically degrades the RNA of RNA-DNA hybrids. The sequence is that of Ribonuclease HII from Prochlorococcus marinus subsp. pastoris (strain CCMP1986 / NIES-2087 / MED4).